A 241-amino-acid chain; its full sequence is ATP synthase subunit a (241 aa).

Helical transmembrane passes span 30 to 50, 91 to 111, 128 to 148, 193 to 213, and 214 to 234; these read GQVF…ISLG, FIGT…LIPW, INTT…AGLS, LVVG…VMFL, and GLFT…YYIG.

Belongs to the ATPase A chain family. F-type ATPases have 2 components, CF(1) - the catalytic core - and CF(0) - the membrane proton channel. CF(1) has five subunits: alpha(3), beta(3), gamma(1), delta(1), epsilon(1). CF(0) has four main subunits: a, b, b' and c.

It localises to the cellular thylakoid membrane. Its function is as follows. Key component of the proton channel; it plays a direct role in the translocation of protons across the membrane. This chain is ATP synthase subunit a, found in Prochlorococcus marinus (strain MIT 9301).